Here is a 106-residue protein sequence, read N- to C-terminus: CDGSH iron-sulfur domain-containing protein 1 (106 aa).

Ser-2 bears the N-acetylserine mark. Residues 10–29 form a helical; Signal-anchor for type III membrane protein membrane-spanning segment; it reads EWIAAVTIAAGTAAIGYLAY. Residues 30–106 lie on the Cytoplasmic side of the membrane; it reads KRFYVKDHRN…GPLIIKKKDT (77 aa). A Glycyl lysine isopeptide (Lys-Gly) (interchain with G-Cter in ubiquitin) cross-link involves residue Lys-40. Residue Lys-53 is the Schiff-base intermediate with pyridoxal 5'-phosphate of the active site. N6-acetyllysine; alternate is present on residues Lys-53 and Lys-66. Glycyl lysine isopeptide (Lys-Gly) (interchain with G-Cter in ubiquitin); alternate cross-links involve residues Lys-53 and Lys-66. [2Fe-2S] cluster-binding residues include Cys-70 and Cys-72. Residues Lys-76 and Lys-77 each participate in a glycyl lysine isopeptide (Lys-Gly) (interchain with G-Cter in ubiquitin) cross-link. Residues Cys-81 and His-85 each coordinate [2Fe-2S] cluster. Positions 84–106 are disordered; the sequence is SHTKHNEETGDNVGPLIIKKKDT. Lys-87 is covalently cross-linked (Glycyl lysine isopeptide (Lys-Gly) (interchain with G-Cter in ubiquitin)). Lys-102 is modified (N6-acetyllysine; alternate). Residue Lys-102 forms a Glycyl lysine isopeptide (Lys-Gly) (interchain with G-Cter in ubiquitin); alternate linkage. Glycyl lysine isopeptide (Lys-Gly) (interchain with G-Cter in ubiquitin) cross-links involve residues Lys-103 and Lys-104.

Belongs to the CISD protein family. In terms of assembly, homodimer. The cofactor is [2Fe-2S] cluster. Requires pyridoxal 5'-phosphate as cofactor. In terms of processing, ubiquitinated by PRKN during mitophagy, leading to its degradation and enhancement of mitophagy. Deubiquitinated by USP30.

The protein resides in the mitochondrion outer membrane. The catalysed reaction is L-cysteine + 2-oxoglutarate = 2-oxo-3-sulfanylpropanoate + L-glutamate. In terms of biological role, L-cysteine transaminase that catalyzes the reversible transfer of the amino group from L-cysteine to the alpha-keto acid 2-oxoglutarate to respectively form 2-oxo-3-sulfanylpropanoate and L-glutamate. The catalytic cycle occurs in the presence of pyridoxal 5'-phosphate (PLP) cofactor that facilitates transamination by initially forming an internal aldimine with the epsilon-amino group of active site Lys-55 residue on the enzyme (PLP-enzyme aldimine), subsequently displaced by formation of an external aldimine with the substrate amino group (PLP-L-cysteine aldimine). The external aldimine is further deprotonated to form a carbanion intermediate, which in the presence of 2-oxoglutarate regenerates PLP yielding final products 2-oxo-3-sulfanylpropanoate and L-glutamate. The proton transfer in carbanion intermediate is suggested to be controlled by the active site lysine residue, whereas PLP stabilizes carbanion structure through electron delocalization, also known as the electron sink effect. Plays a key role in regulating maximal capacity for electron transport and oxidative phosphorylation. May be involved in iron-sulfur cluster shuttling and/or in redox reactions. Can transfer the [2Fe-2S] cluster to an apo-acceptor protein only when in the oxidation state, likely serving as a redox sensor that regulates mitochondrial iron-sulfur cluster assembly and iron trafficking upon oxidative stress. The polypeptide is CDGSH iron-sulfur domain-containing protein 1 (CISD1) (Bos taurus (Bovine)).